The sequence spans 82 residues: Small ribosomal subunit protein bS16 (82 aa).

Belongs to the bacterial ribosomal protein bS16 family.

This Deinococcus deserti (strain DSM 17065 / CIP 109153 / LMG 22923 / VCD115) protein is Small ribosomal subunit protein bS16.